The following is a 378-amino-acid chain: Mitogen-activated protein kinase mpkC (378 aa).

Residues 20–300 (YVNPQPIGMG…AQDALRHPYL (281 aa)) enclose the Protein kinase domain. ATP contacts are provided by residues 26-34 (IGMGSFGLV) and K49. D141 serves as the catalytic Proton acceptor.

This sequence belongs to the protein kinase superfamily. Ser/Thr protein kinase family. MAP kinase subfamily. Mg(2+) serves as cofactor.

It localises to the nucleus. It carries out the reaction L-seryl-[protein] + ATP = O-phospho-L-seryl-[protein] + ADP + H(+). It catalyses the reaction L-threonyl-[protein] + ATP = O-phospho-L-threonyl-[protein] + ADP + H(+). Its activity is regulated as follows. Activated by threonine and tyrosine phosphorylation. In terms of biological role, mitogen-activated protein kinase (MAPK), part of the high-osmolarity glycerol (HOG) pathway. With sakA, plays a role in the osmotic and oxidative stress responses. Involved in paradoxical growth, the cell wall integrity (CWI) pathway and biofilm formation. SakA and mpkC collaborate during virulence and mpkC could act by modulating sakA activity upon exposure to several types of stresses and during cell wall biosynthesis. The protein is Mitogen-activated protein kinase mpkC of Aspergillus fumigatus (strain CBS 144.89 / FGSC A1163 / CEA10) (Neosartorya fumigata).